Reading from the N-terminus, the 310-residue chain is ADP-L-glycero-D-manno-heptose-6-epimerase (310 aa).

NADP(+) is bound by residues 10–11, 31–32, Lys38, Lys53, 75–79, and Asn92; these read LI, DN, and EGACS. The active-site Proton acceptor is the Tyr140. NADP(+) is bound at residue Lys144. Residue Asn169 coordinates substrate. NADP(+) is bound by residues Val170 and Lys178. Lys178 acts as the Proton acceptor in catalysis. Substrate contacts are provided by residues Ser180, His187, 201 to 204, Arg209, and Tyr272; that span reads FAGS.

It belongs to the NAD(P)-dependent epimerase/dehydratase family. HldD subfamily. As to quaternary structure, homopentamer. The cofactor is NADP(+).

It catalyses the reaction ADP-D-glycero-beta-D-manno-heptose = ADP-L-glycero-beta-D-manno-heptose. It participates in nucleotide-sugar biosynthesis; ADP-L-glycero-beta-D-manno-heptose biosynthesis; ADP-L-glycero-beta-D-manno-heptose from D-glycero-beta-D-manno-heptose 7-phosphate: step 4/4. Its function is as follows. Catalyzes the interconversion between ADP-D-glycero-beta-D-manno-heptose and ADP-L-glycero-beta-D-manno-heptose via an epimerization at carbon 6 of the heptose. The polypeptide is ADP-L-glycero-D-manno-heptose-6-epimerase (Erwinia tasmaniensis (strain DSM 17950 / CFBP 7177 / CIP 109463 / NCPPB 4357 / Et1/99)).